The sequence spans 523 residues: Cytochrome P450 CYP82J17 (523 aa).

Residues 4–24 (FLSQPITIVLAILSVLLYNIW) form a helical membrane-spanning segment. Heme is bound at residue cysteine 462.

The protein belongs to the cytochrome P450 family. As to expression, mainly expressed in leaves and seed pods and, to a lower extent, in flowers and stems.

It localises to the membrane. It participates in steroid metabolism; cholesterol metabolism. Involved in the biosynthesis of spiroketal steroid and saponin natural products from cholesterol such as diosgenin and analogs (e.g. furostanol and spirostanol), plant defense compounds used as main precursors for the industrial production of steroid hormones. During the 5,6-spiroketalization of cholesterol, may catalyze the 27-monohydroxylation of furostanol-type steroid to an intermediate product that undergoes a stereospecific formation of the terminal heterocycle to yield diosgenin. The sequence is that of Cytochrome P450 CYP82J17 from Trigonella foenum-graecum (Fenugreek).